Reading from the N-terminus, the 322-residue chain is ATP-dependent 6-phosphofructokinase (322 aa).

Gly-11 provides a ligand contact to ATP. Residue 21–25 coordinates ADP; it reads RAVAR. ATP is bound by residues 72–73 and 102–105; these read RY and GDGS. Residue Asp-103 participates in Mg(2+) binding. 125–127 contacts substrate; sequence TID. Asp-127 (proton acceptor) is an active-site residue. Position 154 (Arg-154) interacts with ADP. Substrate contacts are provided by residues Arg-162 and 169–171; that span reads MGR. Residues 185-187 and 213-215 each bind ADP; these read GAD and KDY. Substrate is bound by residues Glu-222, Arg-246, and 252–255; that span reads HVQR.

It belongs to the phosphofructokinase type A (PFKA) family. ATP-dependent PFK group I subfamily. Prokaryotic clade 'B1' sub-subfamily. Homotetramer. It depends on Mg(2+) as a cofactor.

The protein localises to the cytoplasm. It carries out the reaction beta-D-fructose 6-phosphate + ATP = beta-D-fructose 1,6-bisphosphate + ADP + H(+). The protein operates within carbohydrate degradation; glycolysis; D-glyceraldehyde 3-phosphate and glycerone phosphate from D-glucose: step 3/4. With respect to regulation, allosterically activated by ADP and other diphosphonucleosides, and allosterically inhibited by phosphoenolpyruvate. In terms of biological role, catalyzes the phosphorylation of D-fructose 6-phosphate to fructose 1,6-bisphosphate by ATP, the first committing step of glycolysis. This Pediococcus pentosaceus (strain ATCC 25745 / CCUG 21536 / LMG 10740 / 183-1w) protein is ATP-dependent 6-phosphofructokinase.